The primary structure comprises 2042 residues: Protein mini spindles (2042 aa).

TOG stretches follow at residues Met-1–Ser-229 and Met-267–Gly-505. The interval Met-1–Gly-505 is binds tubulin. Promotes microtubule polymerization stretches follow at residues Met-1–Pro-516 and Thr-581–Arg-1080. 7 HEAT repeats span residues Glu-120–His-157, Ile-160–Ala-197, Leu-270–Lys-311, Gly-315–Lys-353, Asn-357–Leu-394, Ala-396–Asn-433, and Leu-440–Leu-478. The interval Glu-498–Ser-821 is association with microtubule lattice. Positions Pro-506–Lys-572 are disordered. Low complexity predominate over residues Ala-513–Val-531. The tract at residues Thr-581–Pro-814 is TOG 3. HEAT repeat units lie at residues Glu-587–Asp-624, Ala-625–Ser-662, Thr-672–Val-710, and Leu-745–Lys-782. The disordered stretch occupies residues Asp-804–Ala-849. Positions Gln-819 to Pro-830 are enriched in polar residues. A compositionally biased stretch (acidic residues) spans Asp-831–Pro-845. TOG regions lie at residues Ala-849 to Pro-1087 and Thr-1179 to Pro-1415. HEAT repeat units follow at residues Asp-856–Leu-893, Pro-896–Ala-933, Asn-937–Tyr-974, and Glu-1017–Phe-1054. Positions Leu-1083–Glu-1140 are disordered. The interval Glu-1099–Asp-1428 is association with microtubule lattice. 4 HEAT repeats span residues Arg-1205–Asp-1242, Asn-1272–Phe-1309, Lys-1311–Met-1344, and Ile-1346–Glu-1383. 2 disordered regions span residues Ala-1407–Gln-1455 and Asn-1940–Asp-1959. Residues Asn-1940–Gly-1957 show a composition bias toward polar residues.

The protein belongs to the TOG/XMAP215 family. Interacts with tacc, dgt6. Interacts with mv. Interacts with Patronin.

It localises to the cytoplasm. The protein resides in the cytoskeleton. The protein localises to the microtubule organizing center. Its subcellular location is the centrosome. It is found in the spindle. It localises to the perinuclear region. Functionally, binds to the plus end of microtubules and regulates microtubule dynamics and microtubule organization. Function in neurons is essential for adult survival, and is important for climbing behavior and activity. Promotes cytoplasmic microtubule nucleation and elongation. May act as a microtubule antipause factor that rapidly catalyzes the transition from pause to either growth or shrinkage. Involved in mitotic spindle elongation. Involved in the establishment of cell polarity and mitotic spindle orientation in neuroblasts. Required for maintaining the bipolarity of acentrosomal meiotic spindles; the function is dependent on tacc and involves ncd. Involved in oocyte microtubule cytoskeleton organization and bicoid mRNA localization. Seems to be involved in elongation of kinetochore-derived microtubule fibers. In fat body cells, essential component of perinuclear non-centrosomal microtubule-organizing centers (ncMTOCs) which function to accommodate the organization of microtubule (MT) networks to control nuclear positioning and dynein motor-based retrograde endosomal trafficking. Within the ncMTOCs, Msp300 and shot anchors the ncMTOC at the nuclear surface and recruits the MT minus-end regulators Patronin and Nin for assembly, anchoring and/or stabilization of circumferential and radial MTs at the ncMTOCs. Patronin, and perhaps Nin, then recruits msps to the ncMTOC where it is required for the gamma-tubulin-independent elongation and assembly of radial MTs. The polypeptide is Protein mini spindles (msps) (Drosophila melanogaster (Fruit fly)).